Consider the following 198-residue polypeptide: MTIKLELLESALRNALGDQLQSLTLALGEITIVVNSRDYASAMRVLRDHADLRFEELIDLCGVDYSTYGDGAWDGQRFAVVSHLLSITHNWRVRVRVFASDDEMPVVASMTEIWPAANWYEREAFDFFGILFEGHNDLRRILTDYGFIGHPFRKDFPVSGYVEMRYDPEQKRVIYQPVTIDPRENVPRVIREEQYGMK.

Belongs to the complex I 30 kDa subunit family. In terms of assembly, NDH-1 is composed of 14 different subunits. Subunits NuoB, C, D, E, F, and G constitute the peripheral sector of the complex.

The protein resides in the cell inner membrane. It carries out the reaction a quinone + NADH + 5 H(+)(in) = a quinol + NAD(+) + 4 H(+)(out). Functionally, NDH-1 shuttles electrons from NADH, via FMN and iron-sulfur (Fe-S) centers, to quinones in the respiratory chain. The immediate electron acceptor for the enzyme in this species is believed to be ubiquinone. Couples the redox reaction to proton translocation (for every two electrons transferred, four hydrogen ions are translocated across the cytoplasmic membrane), and thus conserves the redox energy in a proton gradient. This chain is NADH-quinone oxidoreductase subunit C, found in Herminiimonas arsenicoxydans.